Reading from the N-terminus, the 431-residue chain is Enolase (431 aa).

Gln166 is a binding site for (2R)-2-phosphoglycerate. The Proton donor role is filled by Glu208. Residues Asp245, Glu288, and Asp315 each contribute to the Mg(2+) site. Residues Lys340, Arg369, Ser370, and Lys391 each coordinate (2R)-2-phosphoglycerate. The active-site Proton acceptor is the Lys340.

This sequence belongs to the enolase family. Mg(2+) is required as a cofactor.

It localises to the cytoplasm. It is found in the secreted. The protein localises to the cell surface. It carries out the reaction (2R)-2-phosphoglycerate = phosphoenolpyruvate + H2O. Its pathway is carbohydrate degradation; glycolysis; pyruvate from D-glyceraldehyde 3-phosphate: step 4/5. Functionally, catalyzes the reversible conversion of 2-phosphoglycerate (2-PG) into phosphoenolpyruvate (PEP). It is essential for the degradation of carbohydrates via glycolysis. The sequence is that of Enolase from Clostridium botulinum (strain ATCC 19397 / Type A).